Here is a 50-residue protein sequence, read N- to C-terminus: Ampulexin 1 (50 aa).

An N-terminal signal peptide occupies residues 1–26 (MKAIMVLFYVMMLTIIASVSMVNGSP).

As to quaternary structure, monomer. Expressed in venom sac and, to a lesser extent, in venom gland. Not expressed in brain.

It is found in the secreted. Amphipathic peptide which probably adopts an alpha-helical structure. When injected in subesophageal ganglia of cockroach P.americana, a natural host for larvae of A.compressa, dampens the escape response for about 1 hour which may contribute to early stages of hypokinesia. Has no antimicrobial activity against E.coli DH5alpha or B.thuringiensis. Is not cytotoxic in vitro. The sequence is that of Ampulexin 1 from Ampulex compressa (Emerald cockroach wasp).